Reading from the N-terminus, the 530-residue chain is Glucose-6-phosphate isomerase (530 aa).

The active-site Proton donor is Glu356. Residues His387 and Lys502 contribute to the active site.

The protein belongs to the GPI family.

It is found in the cytoplasm. The enzyme catalyses alpha-D-glucose 6-phosphate = beta-D-fructose 6-phosphate. It functions in the pathway carbohydrate biosynthesis; gluconeogenesis. Its pathway is carbohydrate degradation; glycolysis; D-glyceraldehyde 3-phosphate and glycerone phosphate from D-glucose: step 2/4. Catalyzes the reversible isomerization of glucose-6-phosphate to fructose-6-phosphate. In Borrelia garinii subsp. bavariensis (strain ATCC BAA-2496 / DSM 23469 / PBi) (Borreliella bavariensis), this protein is Glucose-6-phosphate isomerase.